Here is a 206-residue protein sequence, read N- to C-terminus: Large ribosomal subunit protein uL4 (206 aa).

Residues 44-77 are disordered; the sequence is RQGTRAQKDRQTVKHSTKKPWRQKGTGRARAGMT. Positions 56–70 are enriched in basic residues; it reads VKHSTKKPWRQKGTG.

Belongs to the universal ribosomal protein uL4 family. As to quaternary structure, part of the 50S ribosomal subunit.

In terms of biological role, one of the primary rRNA binding proteins, this protein initially binds near the 5'-end of the 23S rRNA. It is important during the early stages of 50S assembly. It makes multiple contacts with different domains of the 23S rRNA in the assembled 50S subunit and ribosome. Forms part of the polypeptide exit tunnel. This is Large ribosomal subunit protein uL4 from Methylibium petroleiphilum (strain ATCC BAA-1232 / LMG 22953 / PM1).